Consider the following 381-residue polypeptide: MESIGIVAPQTMHFAEPLRLQSGSVIGNYQLVVETYGELNAARSNAVLVCHALNASHHVAGVYADDPRSTGWWDNLVGPGKPLDTNRFFVIGVNNLGSCFGSTGPMSIDPSSGKPYGARFPVVTVEDWVHAQARVADAFGIERFAAVMGGSLGGMQALAWSLMYPERVAHCIDIASTPKLSAQNIAFNEVARSAILSDPDFHGGDYYAHGVKPKRGLRVARMIGHITYLSDDDMAEKFGRALRRADGALDAYNFSFDVEFEVESYLRYQGDKFADYFDANTYLLITRALDYFDPAKAFDGNLTAALAHTQAKYLIASFSTDWRFAPARSREIVKALLDNKRTVSYAEIDAPHGHDAFLLDDARYHNLLRAYYERIANEVGA.

The 316-residue stretch at 45–360 (NAVLVCHALN…PHGHDAFLLD (316 aa)) folds into the AB hydrolase-1 domain. Ser151 functions as the Nucleophile in the catalytic mechanism. Arg221 provides a ligand contact to substrate. Active-site residues include Asp321 and His354. Asp355 is a binding site for substrate.

It belongs to the AB hydrolase superfamily. MetX family. In terms of assembly, homodimer.

The protein resides in the cytoplasm. The catalysed reaction is L-homoserine + succinyl-CoA = O-succinyl-L-homoserine + CoA. Its pathway is amino-acid biosynthesis; L-methionine biosynthesis via de novo pathway; O-succinyl-L-homoserine from L-homoserine: step 1/1. Transfers a succinyl group from succinyl-CoA to L-homoserine, forming succinyl-L-homoserine. This chain is Homoserine O-succinyltransferase, found in Burkholderia ambifaria (strain MC40-6).